A 285-amino-acid chain; its full sequence is ATP phosphoribosyltransferase (285 aa).

Belongs to the ATP phosphoribosyltransferase family. Long subfamily. It depends on Mg(2+) as a cofactor.

The protein localises to the cytoplasm. It carries out the reaction 1-(5-phospho-beta-D-ribosyl)-ATP + diphosphate = 5-phospho-alpha-D-ribose 1-diphosphate + ATP. Its pathway is amino-acid biosynthesis; L-histidine biosynthesis; L-histidine from 5-phospho-alpha-D-ribose 1-diphosphate: step 1/9. With respect to regulation, feedback inhibited by histidine. In terms of biological role, catalyzes the condensation of ATP and 5-phosphoribose 1-diphosphate to form N'-(5'-phosphoribosyl)-ATP (PR-ATP). Has a crucial role in the pathway because the rate of histidine biosynthesis seems to be controlled primarily by regulation of HisG enzymatic activity. This is ATP phosphoribosyltransferase from Metallosphaera sedula (strain ATCC 51363 / DSM 5348 / JCM 9185 / NBRC 15509 / TH2).